The sequence spans 65 residues: Neurotoxin Bot2 (65 aa).

In terms of domain architecture, LCN-type CS-alpha/beta spans 2 to 64 (RDAYIAQPEN…VPIRIEGKCH (63 aa)). Intrachain disulfides connect Cys12–Cys63, Cys16–Cys36, Cys22–Cys46, and Cys26–Cys48. Phe65 carries the phenylalanine amide modification.

It belongs to the long (4 C-C) scorpion toxin superfamily. Sodium channel inhibitor family. Alpha subfamily. Expressed by the venom gland.

Its subcellular location is the secreted. Binds to sodium channels (Nav) and inhibits the inactivation of the activated channels, thereby blocking neuronal transmission. The sequence is that of Neurotoxin Bot2 from Buthus occitanus tunetanus (Common European scorpion).